Consider the following 513-residue polypeptide: Flagellin A (513 aa).

This sequence belongs to the bacterial flagellin family. As to quaternary structure, heteromer of FlaA and FlaB. FlaB is located proximal to the hook while the remainder of the filament is composed of the predominant FlaA.

The protein localises to the secreted. The protein resides in the bacterial flagellum. Its function is as follows. Flagellin is the subunit protein which polymerizes to form the filaments of bacterial flagella. Important for motility and virulence. The chain is Flagellin A (flaA) from Helicobacter felis (strain ATCC 49179 / CCUG 28539 / NCTC 12436 / CS1).